A 551-amino-acid polypeptide reads, in one-letter code: Arginine--tRNA ligase (551 aa).

The 'HIGH' region motif lies at 123–133 (ANPTGPLTIGR).

This sequence belongs to the class-I aminoacyl-tRNA synthetase family. Monomer.

The protein localises to the cytoplasm. The enzyme catalyses tRNA(Arg) + L-arginine + ATP = L-arginyl-tRNA(Arg) + AMP + diphosphate. This Chlorobaculum parvum (strain DSM 263 / NCIMB 8327) (Chlorobium vibrioforme subsp. thiosulfatophilum) protein is Arginine--tRNA ligase.